Consider the following 100-residue polypeptide: NAD(P)H-quinone oxidoreductase subunit 4L, chloroplastic (100 aa).

Helical transmembrane passes span 1-21 (MLEHVLVLSAYLFSVGLYGLI), 31-51 (ICLELIFNAVNINFVTFSDFF), and 60-80 (IFAIFVIAIAAAEAAIGLAIL).

It belongs to the complex I subunit 4L family. NDH is composed of at least 16 different subunits, 5 of which are encoded in the nucleus.

It localises to the plastid. The protein resides in the chloroplast thylakoid membrane. It carries out the reaction a plastoquinone + NADH + (n+1) H(+)(in) = a plastoquinol + NAD(+) + n H(+)(out). It catalyses the reaction a plastoquinone + NADPH + (n+1) H(+)(in) = a plastoquinol + NADP(+) + n H(+)(out). In terms of biological role, NDH shuttles electrons from NAD(P)H:plastoquinone, via FMN and iron-sulfur (Fe-S) centers, to quinones in the photosynthetic chain and possibly in a chloroplast respiratory chain. The immediate electron acceptor for the enzyme in this species is believed to be plastoquinone. Couples the redox reaction to proton translocation, and thus conserves the redox energy in a proton gradient. The chain is NAD(P)H-quinone oxidoreductase subunit 4L, chloroplastic from Trachelium caeruleum (Blue throatwort).